The sequence spans 180 residues: Large ribosomal subunit protein uL5 (180 aa).

Belongs to the universal ribosomal protein uL5 family. Part of the 50S ribosomal subunit; part of the 5S rRNA/L5/L18/L25 subcomplex. Contacts the 5S rRNA and the P site tRNA. Forms a bridge to the 30S subunit in the 70S ribosome.

Its function is as follows. This is one of the proteins that bind and probably mediate the attachment of the 5S RNA into the large ribosomal subunit, where it forms part of the central protuberance. In the 70S ribosome it contacts protein S13 of the 30S subunit (bridge B1b), connecting the 2 subunits; this bridge is implicated in subunit movement. Contacts the P site tRNA; the 5S rRNA and some of its associated proteins might help stabilize positioning of ribosome-bound tRNAs. The sequence is that of Large ribosomal subunit protein uL5 from Stenotrophomonas maltophilia (strain K279a).